A 560-amino-acid chain; its full sequence is DNA ligase B (560 aa).

Lys124 serves as the catalytic N6-AMP-lysine intermediate.

This sequence belongs to the NAD-dependent DNA ligase family. LigB subfamily.

It catalyses the reaction NAD(+) + (deoxyribonucleotide)n-3'-hydroxyl + 5'-phospho-(deoxyribonucleotide)m = (deoxyribonucleotide)n+m + AMP + beta-nicotinamide D-nucleotide.. Catalyzes the formation of phosphodiester linkages between 5'-phosphoryl and 3'-hydroxyl groups in double-stranded DNA using NAD as a coenzyme and as the energy source for the reaction. This chain is DNA ligase B, found in Escherichia coli O17:K52:H18 (strain UMN026 / ExPEC).